A 214-amino-acid chain; its full sequence is Outer-membrane lipoprotein LolB (214 aa).

The signal sequence occupies residues 1–25 (MNNLKRFTESIFSCIALSTLLFLGG). The N-palmitoyl cysteine moiety is linked to residue cysteine 26. Cysteine 26 carries the S-diacylglycerol cysteine lipid modification.

Belongs to the LolB family. As to quaternary structure, monomer.

The protein resides in the cell outer membrane. Its function is as follows. Plays a critical role in the incorporation of lipoproteins in the outer membrane after they are released by the LolA protein. This Shewanella putrefaciens (strain CN-32 / ATCC BAA-453) protein is Outer-membrane lipoprotein LolB.